A 218-amino-acid chain; its full sequence is GTP cyclohydrolase 1 (218 aa).

Cys109, His112, and Cys180 together coordinate Zn(2+).

The protein belongs to the GTP cyclohydrolase I family. In terms of assembly, toroid-shaped homodecamer, composed of two pentamers of five dimers.

The catalysed reaction is GTP + H2O = 7,8-dihydroneopterin 3'-triphosphate + formate + H(+). The protein operates within cofactor biosynthesis; 7,8-dihydroneopterin triphosphate biosynthesis; 7,8-dihydroneopterin triphosphate from GTP: step 1/1. The polypeptide is GTP cyclohydrolase 1 (Histophilus somni (strain 129Pt) (Haemophilus somnus)).